We begin with the raw amino-acid sequence, 207 residues long: Outer-membrane lipoprotein LolB (207 aa).

An N-terminal signal peptide occupies residues Met-1 to Ala-21. Cys-22 carries the N-palmitoyl cysteine lipid modification. A lipid anchor (S-diacylglycerol cysteine) is attached at Cys-22.

Belongs to the LolB family. In terms of assembly, monomer.

It localises to the cell outer membrane. Its function is as follows. Plays a critical role in the incorporation of lipoproteins in the outer membrane after they are released by the LolA protein. The polypeptide is Outer-membrane lipoprotein LolB (Salmonella schwarzengrund (strain CVM19633)).